The sequence spans 156 residues: MPRRREVPKREILPDPKFGSQDLSKFMNVVMIDGKKSVAERIIYGALEQIEKKTGKNAIEVFNTALSNAKPVVEVKSRRVGGANYQVPVEVRPSRRMALAMRWLRDAARKRGEKSMDLRLAGELIDAAEGRGGAMKKRDEVHRMAEANKAFSHFRF.

Belongs to the universal ribosomal protein uS7 family. Part of the 30S ribosomal subunit. Contacts proteins S9 and S11.

One of the primary rRNA binding proteins, it binds directly to 16S rRNA where it nucleates assembly of the head domain of the 30S subunit. Is located at the subunit interface close to the decoding center, probably blocks exit of the E-site tRNA. The sequence is that of Small ribosomal subunit protein uS7 from Chromobacterium violaceum (strain ATCC 12472 / DSM 30191 / JCM 1249 / CCUG 213 / NBRC 12614 / NCIMB 9131 / NCTC 9757 / MK).